Consider the following 288-residue polypeptide: Protein FANTASTIC FOUR 3 (288 aa).

Over residues 48 to 60 (HAEDTRNRNDDKA) the composition is skewed to basic and acidic residues. Disordered regions lie at residues 48 to 100 (HAED…YYVQ), 146 to 172 (ETTT…PLTT), and 222 to 261 (NEFV…IENV). The span at 66–90 (SDSSGWSSLQSLSSGSSSSTKTTTS) shows a compositional bias: low complexity. In terms of domain architecture, FAF spans 165–217 (DLPPPLTTMRGFQCIQMRPHRENGRLVMTATNAPPRNGCFQADRSNGRLRLSI). The span at 223 to 256 (EFVENEEETIEPEETEEYEEEEEEEEDEDEDEVM) shows a compositional bias: acidic residues.

Belongs to the fantastic four family. As to expression, expressed in the shoot apex, stamens, young leaves and young siliques, but not in old leaves. Detected in provascular and vascular tissue, but not in the vegetative meristem. In inflorescences, restricted to the vasculature and absent from young flowers, except from anthers.

Functionally, able to repress WUS when constitutively overexpressed, but have no effect on CLV3. This Arabidopsis thaliana (Mouse-ear cress) protein is Protein FANTASTIC FOUR 3 (FAF3).